The sequence spans 84 residues: Large ribosomal subunit protein bL27 (84 aa).

Positions 1 to 25 are disordered; the sequence is MAHKKAGGSSKNGRDSAGKRLGVKR.

The protein belongs to the bacterial ribosomal protein bL27 family.

The chain is Large ribosomal subunit protein bL27 from Syntrophotalea carbinolica (strain DSM 2380 / NBRC 103641 / GraBd1) (Pelobacter carbinolicus).